A 132-amino-acid polypeptide reads, in one-letter code: Histone H2B.1 (132 aa).

The segment covering Met-1 to Ala-13 has biased composition (low complexity). A disordered region spans residues Met-1–Glu-40. Lys-7 bears the N6-acetyllysine; alternate mark. Residue Lys-7 forms a Glycyl lysine isopeptide (Lys-Gly) (interchain with G-Cter in SUMO); alternate linkage. Ser-11 carries the post-translational modification Phosphoserine. The residue at position 12 (Lys-12) is an N6-acetyllysine. The residue at position 17 (Lys-17) is an N6-acetyllysine; alternate. Lys-17 is covalently cross-linked (Glycyl lysine isopeptide (Lys-Gly) (interchain with G-Cter in SUMO); alternate). Lys-18 participates in a covalent cross-link: Glycyl lysine isopeptide (Lys-Gly) (interchain with G-Cter in SUMO). Lys-125 is covalently cross-linked (Glycyl lysine isopeptide (Lys-Gly) (interchain with G-Cter in ubiquitin)).

This sequence belongs to the histone H2B family. As to quaternary structure, the nucleosome is a histone octamer containing two molecules each of H2A, H2B, H3 and H4 assembled in one H3-H4 heterotetramer and two H2A-H2B heterodimers. The octamer wraps approximately 147 bp of DNA. Monoubiquitinated by the UBC2-BRE1 complex to form H2BK123ub1. H2BK123ub1 gives a specific tag for epigenetic transcriptional activation and is also prerequisite for H3K4me and H3K79me formation. H2BK123ub1 also modulates the formation of double-strand breaks during meiosis and is a prerequisite for DNA-damage checkpoint activation. Post-translationally, phosphorylated by STE20 to form H2BS10ph during progression through meiotic prophase. May be correlated with chromosome condensation. In terms of processing, acetylated by GCN5 to form H2BK11ac and H2BK16ac. H2BK16ac can also be formed by ESA1. Acetylation of N-terminal lysines and particularly formation of H2BK11acK16ac has a positive effect on transcription. Sumoylation to form H2BK6su and probably also H2BK16su or H2BK17su, occurs preferentially near the telomeres and represses gene transcription.

It is found in the nucleus. It localises to the chromosome. Functionally, core component of nucleosome. Nucleosomes wrap and compact DNA into chromatin, limiting DNA accessibility to the cellular machineries which require DNA as a template. Histones thereby play a central role in transcription regulation, DNA repair, DNA replication and chromosomal stability. DNA accessibility is regulated via a complex set of post-translational modifications of histones, also called histone code, and nucleosome remodeling. In Eremothecium gossypii (strain ATCC 10895 / CBS 109.51 / FGSC 9923 / NRRL Y-1056) (Yeast), this protein is Histone H2B.1 (HTB1).